A 472-amino-acid polypeptide reads, in one-letter code: Zinc finger CCCH domain-containing protein 59 (472 aa).

The segment at 87–139 is disordered; that stretch reads YKSPEGNRPRQNAANGSAKPQVIGTGHRVSNQPRKNAVYGPRSSSLSDTRGCG. Residues 145-172 form a C3H1-type zinc finger; that stretch reads SPKKSVCNFWKDGNCKKGEKCQFLHSWS. 5 WD repeats span residues 185–226, 261–301, 310–347, 350–387, and 436–472; these read GHKN…RSIN, HLEG…SDPF, HHSG…CRMT, QHIG…SLKV, and FSTQ…GTKV.

The protein is Zinc finger CCCH domain-containing protein 59 (ZFWD3) of Arabidopsis thaliana (Mouse-ear cress).